A 274-amino-acid polypeptide reads, in one-letter code: HTH-type transcriptional regulator GadX (274 aa).

An HTH araC/xylS-type domain is found at 145-242 (TRVCTVINNN…GMTPTEYQER (98 aa)). DNA-binding regions (H-T-H motif) lie at residues 162–183 (ARIA…REEG) and 209–232 (IKRV…RNYY).

As to quaternary structure, homodimer.

In terms of biological role, positively regulates the expression of about fifteen genes involved in acid resistance such as gadA, gadB and gadC. Depending on the conditions (growth phase and medium), can repress gadW. Negatively regulates perA expression in acidic conditions and positively regulates it in alkaline conditions. The polypeptide is HTH-type transcriptional regulator GadX (gadX) (Escherichia coli O127:H6 (strain E2348/69 / EPEC)).